The sequence spans 224 residues: MRCLKSLLAFFTAFPIGGAELSFKCVWALPYVAAPIIAAIPTTLLYLGASPAIAYIALLAATGLHHLDGLADVGDALLVRDREAARRVLEDPRRGTGGIFAVTAVVVTTAAHLHSPLQLLLGEVFSKSTALLFAGFSKSFKPGLGEAFTEAAKRQWPAALPALAVLAYLAPVTTAVSLATSALLYQLAYRHLGGANGDVYGYLLEVSRSAFVIWSAYVPVPTAF.

4 helical membrane-spanning segments follow: residues 21 to 41 (LSFK…AAIP), 44 to 64 (LLYL…ATGL), 97 to 117 (GGIF…HSPL), and 156 to 176 (WPAA…TTAV).

This sequence belongs to the CobS family. Mg(2+) serves as cofactor.

It is found in the cell membrane. It catalyses the reaction alpha-ribazole + adenosylcob(III)inamide-GDP = adenosylcob(III)alamin + GMP + H(+). The enzyme catalyses alpha-ribazole 5'-phosphate + adenosylcob(III)inamide-GDP = adenosylcob(III)alamin 5'-phosphate + GMP + H(+). It functions in the pathway cofactor biosynthesis; adenosylcobalamin biosynthesis; adenosylcobalamin from cob(II)yrinate a,c-diamide: step 7/7. Functionally, joins adenosylcobinamide-GDP and alpha-ribazole to generate adenosylcobalamin (Ado-cobalamin). Also synthesizes adenosylcobalamin 5'-phosphate from adenosylcobinamide-GDP and alpha-ribazole 5'-phosphate. The polypeptide is Adenosylcobinamide-GDP ribazoletransferase (Pyrobaculum aerophilum (strain ATCC 51768 / DSM 7523 / JCM 9630 / CIP 104966 / NBRC 100827 / IM2)).